Here is a 91-residue protein sequence, read N- to C-terminus: C-C motif chemokine 5 (91 aa).

Residues 1–23 (MKVSATAFAVLLMAAALCAPASA) form the signal peptide. Disulfide bonds link Cys-33-Cys-57 and Cys-34-Cys-73.

Belongs to the intercrine beta (chemokine CC) family.

It localises to the secreted. Its function is as follows. Chemoattractant for blood monocytes, memory T-helper cells and eosinophils. Causes the release of histamine from basophils and activates eosinophils. May activate several chemokine receptors including CCR1, CCR3, CCR4 and CCR5. May also be an agonist of the G protein-coupled receptor GPR75. Together with GPR75, may play a role in neuron survival through activation of a downstream signaling pathway involving the PI3, Akt and MAP kinases. By activating GPR75 may also play a role in insulin secretion by islet cells. The polypeptide is C-C motif chemokine 5 (CCL5) (Bos taurus (Bovine)).